The primary structure comprises 356 residues: UDP-N-acetylglucosamine--N-acetylmuramyl-(pentapeptide) pyrophosphoryl-undecaprenol N-acetylglucosamine transferase (356 aa).

Residues 10-12 (TAG), N123, R159, S193, I240, and Q284 contribute to the UDP-N-acetyl-alpha-D-glucosamine site.

It belongs to the glycosyltransferase 28 family. MurG subfamily.

It localises to the cell membrane. It catalyses the reaction di-trans,octa-cis-undecaprenyl diphospho-N-acetyl-alpha-D-muramoyl-L-alanyl-D-glutamyl-meso-2,6-diaminopimeloyl-D-alanyl-D-alanine + UDP-N-acetyl-alpha-D-glucosamine = di-trans,octa-cis-undecaprenyl diphospho-[N-acetyl-alpha-D-glucosaminyl-(1-&gt;4)]-N-acetyl-alpha-D-muramoyl-L-alanyl-D-glutamyl-meso-2,6-diaminopimeloyl-D-alanyl-D-alanine + UDP + H(+). Its pathway is cell wall biogenesis; peptidoglycan biosynthesis. Functionally, cell wall formation. Catalyzes the transfer of a GlcNAc subunit on undecaprenyl-pyrophosphoryl-MurNAc-pentapeptide (lipid intermediate I) to form undecaprenyl-pyrophosphoryl-MurNAc-(pentapeptide)GlcNAc (lipid intermediate II). This Corynebacterium glutamicum (strain R) protein is UDP-N-acetylglucosamine--N-acetylmuramyl-(pentapeptide) pyrophosphoryl-undecaprenol N-acetylglucosamine transferase.